The sequence spans 483 residues: FAD-linked oxidoreductase pgmH (483 aa).

Residues 54-215 (SIRLATLVVY…TEFKYRVHKQ (162 aa)) form the FAD-binding PCMH-type domain.

This sequence belongs to the oxygen-dependent FAD-linked oxidoreductase family. FAD serves as cofactor.

The protein operates within pigment biosynthesis. It functions in the pathway secondary metabolite biosynthesis. Functionally, FAD-linked oxidoreductase; part of the gene cluster that mediates the biosynthesis of pleosporalin A, ascomycone A, as well as a third cryptic naphthoquinone derived pigment, all responsible for the coloration of conidia. Essential for the production of pleosporalin A, but not the 2 other final products. The pathway begins with the biosynthesis of the cyclized heptaketide 3-acetonyl-1,6,8-trihydroxy-2-naphthaldehyde by the NR-PKS pgmA. The C-6 hydroxyl group is further methylated by the O-methyltransferase pgmB to yield fusarubinaldehyde which is in turn oxidized by the cytochrome P450 monooxygenase pgmC at C-9. The C-1 hydroxyl group is then methylated spontaneously. Although pgmE, pgmD and pgmH are essential for the production of pleosporalin A, it is not the case for the 2 other final products and it remains difficult to assign a specific function to each enzyme. PgmF and pgmG seem not to be involved in pigment biosynthesis although they were regulated by the cluster-specific transcription factor pgmR. In Aspergillus terreus (strain NIH 2624 / FGSC A1156), this protein is FAD-linked oxidoreductase pgmH.